Here is a 216-residue protein sequence, read N- to C-terminus: NADH dehydrogenase [ubiquinone] iron-sulfur protein 7, mitochondrial (216 aa).

A mitochondrion-targeting transit peptide spans 1 to 37 (MAALAALRLLHPILAVRSGVGAALQVRGVHSSMAADS). Residues C91 and C92 each coordinate [4Fe-4S] cluster. At R114 the chain carries Hydroxyarginine. Residues C156 and C186 each coordinate [4Fe-4S] cluster.

This sequence belongs to the complex I 20 kDa subunit family. As to quaternary structure, core subunit of respiratory chain NADH dehydrogenase (Complex I) which is composed of 45 different subunits. This is a component of the iron-sulfur (IP) fragment of the enzyme. The cofactor is [4Fe-4S] cluster. Post-translationally, hydroxylated ar Arg-114 by NDUFAF5 early in the pathway of assembly of complex I, before the formation of the juncture between peripheral and membrane arms.

It is found in the mitochondrion inner membrane. The catalysed reaction is a ubiquinone + NADH + 5 H(+)(in) = a ubiquinol + NAD(+) + 4 H(+)(out). Functionally, core subunit of the mitochondrial membrane respiratory chain NADH dehydrogenase (Complex I) which catalyzes electron transfer from NADH through the respiratory chain, using ubiquinone as an electron acceptor. Essential for the catalytic activity of complex I. This Bos taurus (Bovine) protein is NADH dehydrogenase [ubiquinone] iron-sulfur protein 7, mitochondrial (NDUFS7).